The chain runs to 421 residues: CinA-like protein (421 aa).

This sequence belongs to the CinA family.

In Mycobacterium sp. (strain JLS), this protein is CinA-like protein.